The sequence spans 228 residues: Probable ribosomal RNA small subunit methyltransferase A (228 aa).

Positions 9, 11, 34, 55, 78, and 93 each coordinate S-adenosyl-L-methionine.

It belongs to the class I-like SAM-binding methyltransferase superfamily. rRNA adenine N(6)-methyltransferase family. RsmA subfamily.

The protein resides in the cytoplasm. Specifically dimethylates two adjacent adenosines in the loop of a conserved hairpin near the 3'-end of 16S rRNA in the 30S particle. May play a critical role in biogenesis of 30S subunits. The polypeptide is Probable ribosomal RNA small subunit methyltransferase A (Pyrobaculum aerophilum (strain ATCC 51768 / DSM 7523 / JCM 9630 / CIP 104966 / NBRC 100827 / IM2)).